The sequence spans 145 residues: Transcriptional regulator MraZ (145 aa).

SpoVT-AbrB domains are found at residues Thr-5 to Glu-49 and Thr-78 to Val-121.

Belongs to the MraZ family. In terms of assembly, forms oligomers.

It is found in the cytoplasm. It localises to the nucleoid. The sequence is that of Transcriptional regulator MraZ from Ureaplasma parvum serovar 3 (strain ATCC 27815 / 27 / NCTC 11736).